Reading from the N-terminus, the 295-residue chain is CBY1-interacting BAR domain-containing protein 1 (295 aa).

The transit peptide at 1 to 49 (MMSRTPDARARDTQTKQIQENITSVEKHFGDLCQLFAAYVRKTARLRDK) directs the protein to the mitochondrion. A BAR-like region spans residues 12–222 (DTQTKQIQEN…NVDEEGDLEV (211 aa)). The stretch at 111-185 (KREDLKQTQS…KQKIRDIKKV (75 aa)) forms a coiled coil. The span at 243–265 (SKLSLNRTGTSMSKSGTMQSRTS) shows a compositional bias: polar residues. The disordered stretch occupies residues 243–295 (SKLSLNRTGTSMSKSGTMQSRTSSRQRKRDDEEDEEEDDEDEDDLEEVTDDEH). A compositionally biased stretch (acidic residues) spans 273–295 (DEEDEEEDDEDEDDLEEVTDDEH).

The protein belongs to the CIBAR family.

It is found in the cytoplasm. The protein resides in the cytoskeleton. Its subcellular location is the microtubule organizing center. It localises to the centrosome. The protein localises to the centriole. It is found in the cell projection. The protein resides in the cilium. Its subcellular location is the nucleus. It localises to the mitochondrion inner membrane. The protein localises to the flagellum. Its function is as follows. Plays a critical role in regulating mitochondrial ultrastructure and function by maintaining the integrity of mitochondrial morphology, particularly the organization of cristae. Plays a crucial role in ciliogenesis. Plays a key role in the correct positioning of the annulus, a septin-based ring structure in the sperm flagellum, serving both as a physical barrier and a membrane diffusion barrier that separates the midpiece (MP) from the principal piece (PP). In Danio rerio (Zebrafish), this protein is CBY1-interacting BAR domain-containing protein 1 (cibar1).